The following is a 620-amino-acid chain: Ion-translocating oxidoreductase complex subunit C (620 aa).

4Fe-4S ferredoxin-type domains lie at 366 to 397 (TEMGLSEPEQSCIRCGLCVDACPAGLLPQQLY) and 407 to 436 (KARNHNLFDCIECGACAYVCPSNIPLVQYY). Cysteine 377, cysteine 380, cysteine 383, cysteine 387, cysteine 416, cysteine 419, cysteine 422, and cysteine 426 together coordinate [4Fe-4S] cluster.

Belongs to the 4Fe4S bacterial-type ferredoxin family. RnfC subfamily. As to quaternary structure, the complex is composed of six subunits: RnfA, RnfB, RnfC, RnfD, RnfE and RnfG. It depends on [4Fe-4S] cluster as a cofactor.

Its subcellular location is the cell inner membrane. In terms of biological role, part of a membrane-bound complex that couples electron transfer with translocation of ions across the membrane. The polypeptide is Ion-translocating oxidoreductase complex subunit C (Yersinia pestis bv. Antiqua (strain Antiqua)).